Reading from the N-terminus, the 508-residue chain is ATP synthase subunit alpha (508 aa).

169 to 176 (GDRGTGKS) contacts ATP.

This sequence belongs to the ATPase alpha/beta chains family. F-type ATPases have 2 components, CF(1) - the catalytic core - and CF(0) - the membrane proton channel. CF(1) has five subunits: alpha(3), beta(3), gamma(1), delta(1), epsilon(1). CF(0) has three main subunits: a(1), b(2) and c(9-12). The alpha and beta chains form an alternating ring which encloses part of the gamma chain. CF(1) is attached to CF(0) by a central stalk formed by the gamma and epsilon chains, while a peripheral stalk is formed by the delta and b chains.

It is found in the cell membrane. It carries out the reaction ATP + H2O + 4 H(+)(in) = ADP + phosphate + 5 H(+)(out). Functionally, produces ATP from ADP in the presence of a proton gradient across the membrane. The alpha chain is a regulatory subunit. The protein is ATP synthase subunit alpha of Natranaerobius thermophilus (strain ATCC BAA-1301 / DSM 18059 / JW/NM-WN-LF).